A 429-amino-acid polypeptide reads, in one-letter code: Glutamate-1-semialdehyde 2,1-aminomutase (429 aa).

N6-(pyridoxal phosphate)lysine is present on lysine 265.

Belongs to the class-III pyridoxal-phosphate-dependent aminotransferase family. HemL subfamily. Homodimer. It depends on pyridoxal 5'-phosphate as a cofactor.

The protein resides in the cytoplasm. It catalyses the reaction (S)-4-amino-5-oxopentanoate = 5-aminolevulinate. It participates in porphyrin-containing compound metabolism; protoporphyrin-IX biosynthesis; 5-aminolevulinate from L-glutamyl-tRNA(Glu): step 2/2. This is Glutamate-1-semialdehyde 2,1-aminomutase from Alkalilimnicola ehrlichii (strain ATCC BAA-1101 / DSM 17681 / MLHE-1).